A 529-amino-acid polypeptide reads, in one-letter code: GMP synthase [glutamine-hydrolyzing] (529 aa).

A Glutamine amidotransferase type-1 domain is found at 16-205 (PVLVVDFGAQ…LHDFAGLDAD (190 aa)). Residue Cys93 is the Nucleophile of the active site. Catalysis depends on residues His179 and Glu181. Residues 206-403 (WTAANIAGVL…LDLPEEIVAR (198 aa)) form the GMPS ATP-PPase domain. Residue 233 to 239 (SGGVDSA) participates in ATP binding.

In terms of assembly, homodimer.

The enzyme catalyses XMP + L-glutamine + ATP + H2O = GMP + L-glutamate + AMP + diphosphate + 2 H(+). The protein operates within purine metabolism; GMP biosynthesis; GMP from XMP (L-Gln route): step 1/1. Functionally, catalyzes the synthesis of GMP from XMP. This chain is GMP synthase [glutamine-hydrolyzing], found in Mycobacterium leprae (strain Br4923).